The primary structure comprises 283 residues: Pantothenate synthetase (283 aa).

Residue 30–37 participates in ATP binding; that stretch reads MGNLHDGH. Residue histidine 37 is the Proton donor of the active site. Residue glutamine 61 participates in (R)-pantoate binding. Position 61 (glutamine 61) interacts with beta-alanine. 149-152 lines the ATP pocket; it reads GEKD. Glutamine 155 contacts (R)-pantoate. Residues methionine 178 and 186–189 contribute to the ATP site; that span reads LSSR.

The protein belongs to the pantothenate synthetase family. Homodimer.

The protein localises to the cytoplasm. The enzyme catalyses (R)-pantoate + beta-alanine + ATP = (R)-pantothenate + AMP + diphosphate + H(+). It functions in the pathway cofactor biosynthesis; (R)-pantothenate biosynthesis; (R)-pantothenate from (R)-pantoate and beta-alanine: step 1/1. Its activity is regulated as follows. Activation requires a combination of a divalent cation, magnesium or manganese, and a monovalent cation, potassium or ammonium. Above the optimum concentration for activation, magnesium and manganese are rather inhibitory. Also activated by 2-mercaptoethanol, dithiothreitol, cysteine and glutathione. Inhibited by divalent cations (mercury, cobalt, zinc, copper, silver), chelating agents (EDTA, EGTA and o-phenanthroline), and analogs of beta-alanine (taurine, gamma-aminobutyrate, gamma-amino-beta-hydroxybutyrate). Functionally, catalyzes the condensation of pantoate with beta-alanine in an ATP-dependent reaction via a pantoyl-adenylate intermediate. This Escherichia coli (strain K12) protein is Pantothenate synthetase (panC).